Here is a 356-residue protein sequence, read N- to C-terminus: tRNA N6-adenosine threonylcarbamoyltransferase (356 aa).

Fe cation-binding residues include His-115 and His-119. Substrate contacts are provided by residues 138–142, Asp-171, Gly-184, and Asn-277; that span reads LVSGG. Position 305 (Asp-305) interacts with Fe cation.

It belongs to the KAE1 / TsaD family. Fe(2+) serves as cofactor.

The protein localises to the cytoplasm. The enzyme catalyses L-threonylcarbamoyladenylate + adenosine(37) in tRNA = N(6)-L-threonylcarbamoyladenosine(37) in tRNA + AMP + H(+). Functionally, required for the formation of a threonylcarbamoyl group on adenosine at position 37 (t(6)A37) in tRNAs that read codons beginning with adenine. Is involved in the transfer of the threonylcarbamoyl moiety of threonylcarbamoyl-AMP (TC-AMP) to the N6 group of A37, together with TsaE and TsaB. TsaD likely plays a direct catalytic role in this reaction. The protein is tRNA N6-adenosine threonylcarbamoyltransferase of Polaromonas naphthalenivorans (strain CJ2).